The chain runs to 96 residues: MLGKIAVEVAYALPEKQYLQRVTLQEGATVEEAIRASGLLELRTDIDLTKNKVGIYSRPAKLSDSVHDGDRVEIYRPLIADPKELRRQRAEKSANK.

Belongs to the UPF0125 (RnfH) family.

The chain is Protein RnfH from Shigella flexneri.